The primary structure comprises 274 residues: Diaminopimelate epimerase (274 aa).

Positions 11, 44, and 64 each coordinate substrate. Catalysis depends on cysteine 73, which acts as the Proton donor. Residues 74–75, asparagine 157, asparagine 190, and 208–209 contribute to the substrate site; these read GN and ER. The active-site Proton acceptor is cysteine 217. 218–219 contributes to the substrate binding site; sequence GS.

This sequence belongs to the diaminopimelate epimerase family. As to quaternary structure, homodimer.

Its subcellular location is the cytoplasm. The catalysed reaction is (2S,6S)-2,6-diaminopimelate = meso-2,6-diaminopimelate. It participates in amino-acid biosynthesis; L-lysine biosynthesis via DAP pathway; DL-2,6-diaminopimelate from LL-2,6-diaminopimelate: step 1/1. In terms of biological role, catalyzes the stereoinversion of LL-2,6-diaminopimelate (L,L-DAP) to meso-diaminopimelate (meso-DAP), a precursor of L-lysine and an essential component of the bacterial peptidoglycan. The sequence is that of Diaminopimelate epimerase from Escherichia fergusonii (strain ATCC 35469 / DSM 13698 / CCUG 18766 / IAM 14443 / JCM 21226 / LMG 7866 / NBRC 102419 / NCTC 12128 / CDC 0568-73).